The following is a 162-amino-acid chain: Ubiquitin-fold modifier-conjugating enzyme 1 (162 aa).

Residue C115 is the Glycyl thioester intermediate of the active site.

This sequence belongs to the ubiquitin-conjugating enzyme family. UFC1 subfamily. In terms of assembly, interacts with uba-5.

In terms of biological role, E2-like enzyme which forms an intermediate with ufm-1. The intermediate is formed via a thioester linkage. In Caenorhabditis briggsae, this protein is Ubiquitin-fold modifier-conjugating enzyme 1.